The following is an 824-amino-acid chain: Molybdenum cofactor sulfurase (824 aa).

K274 is modified (N6-(pyridoxal phosphate)lysine). The active site involves C433. The region spanning 655-822 (CSSSKYRSCT…LQVGQQVYPS (168 aa)) is the MOSC domain.

The protein belongs to the class-V pyridoxal-phosphate-dependent aminotransferase family. MOCOS subfamily. Pyridoxal 5'-phosphate is required as a cofactor.

It catalyses the reaction Mo-molybdopterin + L-cysteine + AH2 = thio-Mo-molybdopterin + L-alanine + A + H2O. Its pathway is cofactor biosynthesis; molybdopterin biosynthesis. In terms of biological role, sulfurates the molybdenum cofactor. Sulfation of molybdenum is essential for xanthine dehydrogenase (XDH) and aldehyde oxidase (ADO) enzymes in which molybdenum cofactor is liganded by 1 oxygen and 1 sulfur atom in active form. The chain is Molybdenum cofactor sulfurase (MCSU3) from Oryza sativa subsp. japonica (Rice).